A 132-amino-acid polypeptide reads, in one-letter code: MAILISPSNNTGWGLGTHKLFGGAKQKSDQHPVYVQAHYRAPWGGKGRRRPGRARGVPLDPKTEAEVVATIDEVARNGPPAARLVLEAARRVGAYNLRRARKLTPAGRAMAAMRARQMVNQAKRRKRRVRSK.

A propeptide spanning residues Ala2–Gly23 is cleaved from the precursor. The short motif at Arg124–Lys132 is the Nuclear localization signal element.

It belongs to the adenoviridae histone-like nucleoprotein family. In terms of assembly, interacts with the core-capsid bridging protein; this interaction bridges the virus core to the capsid. Interacts with host NPM1; this interaction might play a role in placing the pre-histone-like nucleoprotein on the viral DNA or regulating viral gene expression. Interacts with host HMGB1; this interaction inhibits host immune response. Post-translationally, cleaved near the N-terminus by the viral protease during virion maturation to form the mature protein.

It localises to the virion. Its subcellular location is the host nucleus. The protein localises to the host nucleolus. Plays a role in the inhibition of host immune response within the nucleus. Interacts with cellular nucleosomes and immobilizes the host immune danger signal HMGB1 on chromatin. In turn, prevents HMGB1 release out of the cell and thus decreases inflammation. Also plays a role in the wrapping and condensation of the viral DNA. May also promote viral genome import into the nucleus. The chain is Pre-histone-like nucleoprotein from Canine adenovirus serotype 1 (strain CLL) (CAdV-1).